A 1504-amino-acid polypeptide reads, in one-letter code: DNA polymerase zeta catalytic subunit (1504 aa).

Zn(2+) contacts are provided by Cys-1398, Cys-1401, Cys-1414, and Cys-1417. The segment at 1398 to 1417 (CCNCGEELTKICSLQLCDDC) adopts a CysA-type zinc-finger fold. Cys-1446, Cys-1449, Cys-1468, and Cys-1473 together coordinate [4Fe-4S] cluster. Positions 1446–1473 (CRTCSYRYTSDAGIENDHIASKCNSYDC) match the CysB motif motif.

Belongs to the DNA polymerase type-B family. As to quaternary structure, forms DNA polymerase zeta with REV7. Requires [4Fe-4S] cluster as cofactor.

The protein localises to the mitochondrion. The protein resides in the nucleus. The catalysed reaction is DNA(n) + a 2'-deoxyribonucleoside 5'-triphosphate = DNA(n+1) + diphosphate. Its function is as follows. Nonessential DNA polymerase. Required for DNA damage induced mutagenesis. Involved in DNA repair, mitochondrial DNA repair and translesion synthesis. Translesion synthesis in S.cerevisiae may use a specialized DNA polymerase that is not required for other DNA replicative processes. Has a role in the bypass of abasic (AP) sites. Highly inefficient in incorporating nucleotides opposite the AP site, but efficiently extends from nucleotides, particularly an A, inserted opposite the lesion. This is DNA polymerase zeta catalytic subunit (REV3) from Saccharomyces cerevisiae (strain ATCC 204508 / S288c) (Baker's yeast).